Here is an 89-residue protein sequence, read N- to C-terminus: MSERKAVIKNADMSEEMQEDAIHIAAGAIDKHDLEKDIAANIKKDFDRKYHPTWHCIVGRHFGSYVTHETHNFIYFYLDDRAFLLFKSG.

The protein belongs to the dynein light chain family. As to expression, tegument.

Its subcellular location is the cytoplasm. The protein resides in the cytoskeleton. Functionally, acts as a non-catalytic accessory component of a dynein complex. This Schistosoma mansoni (Blood fluke) protein is Dynein light chain (DLC).